Here is a 396-residue protein sequence, read N- to C-terminus: Pre-mRNA-splicing regulator WTAP (396 aa).

M1 is modified (N-acetylmethionine). S14 carries the post-translational modification Phosphoserine. 3 stretches are compositionally biased toward low complexity: residues 240–257 (QQQQSQASAPSTSRTTAS), 278–291 (SNGSSSRQRTSGSG), and 304–316 (PSSPGNGNKSSNS). Residues 240–396 (QQQQSQASAP…SSVNVQGSVL (157 aa)) form a disordered region. S305, S306, and S341 each carry phosphoserine. The segment covering 340-356 (DSPTGSENSLTHQSNDT) has biased composition (polar residues). Position 350 is a phosphothreonine (T350). The segment covering 357–368 (DSSHDPQEEKAV) has biased composition (basic and acidic residues). Residues 380-396 (HVQNGLDSSVNVQGSVL) show a composition bias toward polar residues. Residue S388 is modified to Phosphoserine.

It belongs to the fl(2)d family. As to quaternary structure, component of the WMM complex, a N6-methyltransferase complex composed of a catalytic subcomplex, named MAC, and of an associated subcomplex, named MACOM. The MAC subcomplex is composed of METTL3 and METTL14. The MACOM subcomplex is composed of WTAP, ZC3H13, CBLL1/HAKAI, VIRMA, and, in some cases of RBM15 (RBM15 or RBM15B). Interacts with WT1. Also a component of a MACOM-like complex, named WTAP complex, composed of WTAP, ZC3H13, CBLL1, VIRMA, RBM15, BCLAF1 and THRAP3. As to expression, ubiquitously expressed.

The protein resides in the nucleus speckle. Its subcellular location is the nucleus. It is found in the nucleoplasm. The protein localises to the cytoplasm. Associated component of the WMM complex, a complex that mediates N6-methyladenosine (m6A) methylation of RNAs, a modification that plays a role in the efficiency of mRNA splicing and RNA processing. Required for accumulation of METTL3 and METTL14 to nuclear speckle. Acts as a mRNA splicing regulator. Regulates G2/M cell-cycle transition by binding to the 3' UTR of CCNA2, which enhances its stability. Impairs WT1 DNA-binding ability and inhibits expression of WT1 target genes. The protein is Pre-mRNA-splicing regulator WTAP of Homo sapiens (Human).